A 31-amino-acid chain; its full sequence is Photosystem II reaction center protein T (31 aa).

Residues 3–23 (SLVYIFVFVVALGVLFFAIAF) traverse the membrane as a helical segment.

It belongs to the PsbT family. PSII is composed of 1 copy each of membrane proteins PsbA, PsbB, PsbC, PsbD, PsbE, PsbF, PsbH, PsbI, PsbJ, PsbK, PsbL, PsbM, PsbT, PsbX, PsbY, PsbZ, Psb30/Ycf12, peripheral proteins PsbO, CyanoQ (PsbQ), PsbU, PsbV and a large number of cofactors. It forms dimeric complexes.

It is found in the cellular thylakoid membrane. Functionally, found at the monomer-monomer interface of the photosystem II (PS II) dimer, plays a role in assembly and dimerization of PSII. PSII is a light-driven water plastoquinone oxidoreductase, using light energy to abstract electrons from H(2)O, generating a proton gradient subsequently used for ATP formation. The protein is Photosystem II reaction center protein T of Synechococcus elongatus (strain ATCC 33912 / PCC 7942 / FACHB-805) (Anacystis nidulans R2).